Here is a 1773-residue protein sequence, read N- to C-terminus: Plexin-2 (1773 aa).

An N-terminal signal peptide occupies residues 1-19 (MLFIESAFLVLTSLSAAEA). The Sema domain occupies 20–436 (ATPFEGGVKQ…MPYGIVMEEL (417 aa)). Residues 20 to 1130 (ATPFEGGVKQ…SDHALPSRLS (1111 aa)) lie on the Extracellular side of the membrane. Asn65 carries an N-linked (GlcNAc...) asparagine glycan. Disulfide bonds link Cys83/Cys90, Cys117/Cys125, Cys239/Cys341, Cys255/Cys292, Cys310/Cys328, Cys439/Cys456, Cys445/Cys479, Cys448/Cys465, and Cys459/Cys471. Asn241 carries an N-linked (GlcNAc...) asparagine glycan. A PSI 1 domain is found at 438 to 480 (TCAHHESCTDCQVSVDPLCQWCHPTQSCTTSSRCSGPLTTQCP). The N-linked (GlcNAc...) asparagine glycan is linked to Asn494. The cysteines at positions 516 and 538 are disulfide-linked. An N-linked (GlcNAc...) asparagine glycan is attached at Asn566. The 38-residue stretch at 571–608 (DCAGYSTCSTCMSSEFGCQWCSHKCSSSCGSASAKACV) folds into the PSI 2 domain. 2 N-linked (GlcNAc...) asparagine glycosylation sites follow: Asn670 and Asn693. The region spanning 698 to 739 (SCSNLAADCSSCLALSPSLSCGWCNRKCSHECHESKATAVCD) is the PSI 3 domain. IPT/TIG domains lie at 741 to 829 (PKID…FSFV), 831 to 916 (VSIF…FEYR), and 919 to 1006 (PSVN…FLMD). 4 N-linked (GlcNAc...) asparagine glycosylation sites follow: Asn855, Asn877, Asn975, and Asn1007. A helical membrane pass occupies residues 1131–1151 (FLILGLLLFTVITLIVMCLIF). Residues 1150–1188 (IFKRRRQEREKEYRKIQLQMENLENNVRKECKQAFAELQ) adopt a coiled-coil conformation. Residues 1152–1764 (KRRRQEREKE…LHVCLETDNH (613 aa)) lie on the Cytoplasmic side of the membrane.

This sequence belongs to the plexin family. In terms of assembly, interacts with mab-20.

The protein localises to the cell membrane. In terms of biological role, involved as a receptor for mab-20/sema-2a in the formation or stabilization of cell-cell contacts at several stages of epithelial morphogenesis. In early embryonic development, required for proper ventral closure of the epidermis. During male tail morphogenesis, involved in precursor cell sorting and in the formation of distinct sensory rays. Involved in axon guidance of SDQL neurons during neurogenesis. This chain is Plexin-2 (plx-2), found in Caenorhabditis briggsae.